The following is a 466-amino-acid chain: IQ domain-containing protein C (466 aa).

The IQ domain maps to 6 to 35 (LVRKVSALQACVRGFLVRRQFQSLRAEYEA). 4 disordered regions span residues 105 to 157 (KSGE…PHSQ), 214 to 233 (EQAC…DQSY), 238 to 310 (TGEL…QTFG), and 394 to 466 (VLDL…EPPG). Residues 132–153 (PSQEKTRDTTRMENPEATDQRL) show a composition bias toward basic and acidic residues. Positions 282 to 293 (GPPSSIPSNSQA) are enriched in polar residues. Residues 297–306 (RLTKGPDDGR) show a composition bias toward basic and acidic residues. Residue Ser-438 is modified to Phosphoserine.

The polypeptide is IQ domain-containing protein C (IQCC) (Homo sapiens (Human)).